The sequence spans 150 residues: Mating pheromone 1 (150 aa).

The first 16 residues, 1–16 (MKAIFIILAILMVTQA), serve as a signal peptide directing secretion. Positions 17–52 (FKMTSKVNTKLQSQIQSKFQSKNKLASTFQTSSKLK) are excised as a propeptide.

Its subcellular location is the secreted. Mating ciliate pheromones (or gamones) are diffusible extracellular communication signals that distinguish different intraspecific classes of cells commonly referred to as 'mating types'. They prepare the latter for conjugation by changing their cell surface properties. This Euplotoides octocarinatus (Freshwater ciliate) protein is Mating pheromone 1.